Reading from the N-terminus, the 442-residue chain is Endothelin receptor type B (442 aa).

An N-terminal signal peptide occupies residues 1–26 (MQPPPSLCGRALVALVLACGLSRIWG). Residues 27-101 (EERGFPPDRA…GSIEIKETFK (75 aa)) lie on the Extracellular side of the membrane. The N-linked (GlcNAc...) asparagine glycan is linked to asparagine 59. The interval 69-88 (AEVPKGDRTAGSPPRTISPP) is disordered. A helical transmembrane segment spans residues 102 to 126 (YINTVVSCLVFVLGIIGNSTLLRII). Residues 127 to 137 (YKNKCMRNGPN) are Cytoplasmic-facing. A helical membrane pass occupies residues 138–163 (ILIASLALGDLLHIIIDIPITVYKLL). Residues 164 to 175 (AEDWPFGVEMCK) lie on the Extracellular side of the membrane. A disulfide bridge links cysteine 174 with cysteine 255. The chain crosses the membrane as a helical span at residues 176 to 197 (LVPFIQKASVGITVLSLCALSI). Topologically, residues 198-218 (DRYRAVASWSRIKGIGVPKWT) are cytoplasmic. Residues 219-243 (AVEIVLIWVVSVVLAVPEAVGFDMI) traverse the membrane as a helical segment. At 244 to 271 (TIDYKGRYLRICLLHPTQKTAFMQFYKT) the chain is on the extracellular side. Residues 272 to 296 (AKDWWLFSFYFCLPLAITAFFYTLM) form a helical membrane-spanning segment. Residues 297 to 324 (TCEMLRKKSGMQIALNDHLKQRREVAKT) lie on the Cytoplasmic side of the membrane. Position 305 is a phosphoserine (serine 305). A helical transmembrane segment spans residues 325 to 350 (VFCLVLVFALCWLPLHLSRILKLTIY). Topologically, residues 351-362 (DQNDPNRCELLS) are extracellular. Residues 363-389 (FLLVLDYIGINMASLNSCINPIALYLV) traverse the membrane as a helical segment. Over 390 to 442 (SKRFKNCFKSCLCCWCQSFEEKQSLEEKQSCLKFKANDHGYDNFRSSNKYSSS) the chain is Cytoplasmic. Residues cysteine 402, cysteine 403, and cysteine 405 are each lipidated (S-palmitoyl cysteine). Residue serine 419 is modified to Phosphoserine. Tyrosine 439 is subject to Phosphotyrosine. Residues serine 440, serine 441, and serine 442 each carry the phosphoserine modification.

The protein belongs to the G-protein coupled receptor 1 family. Endothelin receptor subfamily. EDNRB sub-subfamily.

It localises to the cell membrane. Its function is as follows. Non-specific receptor for endothelin 1, 2, and 3. Mediates its action by association with G proteins that activate a phosphatidylinositol-calcium second messenger system. The protein is Endothelin receptor type B (EDNRB) of Canis lupus familiaris (Dog).